A 330-amino-acid polypeptide reads, in one-letter code: GTPase Obg (330 aa).

In terms of domain architecture, Obg spans 1–159 (MHFIDEVKIY…MWIHLSLKLL (159 aa)). Positions 160–327 (SDVGLVGLPN…IVKLALETIK (168 aa)) constitute an OBG-type G domain. Residues 166 to 173 (GLPNAGKS), 191 to 195 (FTTLV), 212 to 215 (DIPG), 279 to 282 (NKCD), and 308 to 310 (STC) each bind GTP. Mg(2+)-binding residues include Ser173 and Thr193.

This sequence belongs to the TRAFAC class OBG-HflX-like GTPase superfamily. OBG GTPase family. In terms of assembly, monomer. It depends on Mg(2+) as a cofactor.

It is found in the cytoplasm. Its function is as follows. An essential GTPase which binds GTP, GDP and possibly (p)ppGpp with moderate affinity, with high nucleotide exchange rates and a fairly low GTP hydrolysis rate. Plays a role in control of the cell cycle, stress response, ribosome biogenesis and in those bacteria that undergo differentiation, in morphogenesis control. This chain is GTPase Obg, found in Rickettsia rickettsii (strain Iowa).